The sequence spans 262 residues: Cell division protein ZapD (262 aa).

It belongs to the ZapD family. Interacts with FtsZ.

The protein resides in the cytoplasm. Its function is as follows. Cell division factor that enhances FtsZ-ring assembly. Directly interacts with FtsZ and promotes bundling of FtsZ protofilaments, with a reduction in FtsZ GTPase activity. This is Cell division protein ZapD from Nitrosomonas europaea (strain ATCC 19718 / CIP 103999 / KCTC 2705 / NBRC 14298).